Here is a 285-residue protein sequence, read N- to C-terminus: Inhibitor of growth protein 5 (285 aa).

The segment at 116–225 (EKASSTRAKS…ATHPSDVMDM (110 aa)) is disordered. Over residues 131-149 (KKGRKKTKDSKTTGKKKKS) the composition is skewed to basic residues. Positions 160-178 (NNQSNANSSVNSSSNAGQG) are enriched in low complexity. The segment at 232-281 (PTYCLCHQVSYGEMIGCDNPDCPIEWFHFACVGLTTKPKGKWFCPKCTQD) adopts a PHD-type zinc-finger fold. Zn(2+)-binding residues include cysteine 235, cysteine 237, cysteine 248, cysteine 253, histidine 259, cysteine 262, cysteine 275, and cysteine 278.

The protein belongs to the ING family. Component of the Enok complex composed of at least Br140, enok, Eaf6 and Ing5.

The protein resides in the nucleus. It localises to the chromosome. Functionally, component of the Enok complex which has a histone H3 acetyltransferase activity. The chain is Inhibitor of growth protein 5 from Drosophila melanogaster (Fruit fly).